A 702-amino-acid chain; its full sequence is Ribosomal RNA large subunit methyltransferase K/L (702 aa).

The region spanning 43–154 (LVYQSLMWSR…KETASIALDL (112 aa)) is the THUMP domain.

Belongs to the methyltransferase superfamily. RlmKL family.

It is found in the cytoplasm. It catalyses the reaction guanosine(2445) in 23S rRNA + S-adenosyl-L-methionine = N(2)-methylguanosine(2445) in 23S rRNA + S-adenosyl-L-homocysteine + H(+). The enzyme catalyses guanosine(2069) in 23S rRNA + S-adenosyl-L-methionine = N(2)-methylguanosine(2069) in 23S rRNA + S-adenosyl-L-homocysteine + H(+). Specifically methylates the guanine in position 2445 (m2G2445) and the guanine in position 2069 (m7G2069) of 23S rRNA. The sequence is that of Ribosomal RNA large subunit methyltransferase K/L from Shigella sonnei (strain Ss046).